The primary structure comprises 1523 residues: Lysophospholipase nte1 (1523 aa).

Residues 1–66 (MADGVTLVDS…LPPVPTTMAG (66 aa)) lie on the Cytoplasmic side of the membrane. Residues 67–87 (WIGWVFSFFFQVIPSVLYWVI) traverse the membrane as a helical segment. Residues 88 to 109 (TFSTITLPTWLFTLFSMSLTFT) are Lumenal-facing. Residues 110–130 (MNFTTLLLIVLAMVSTISWFI) form a helical membrane-spanning segment. Residues 131-1523 (RYRFLNMYSR…RTMAPRRASI (1393 aa)) lie on the Cytoplasmic side of the membrane. Disordered regions lie at residues 309–384 (VPNS…KSVH) and 524–545 (RAATVVTPESAPAEHDTYGVSP). The span at 370-382 (ESRKHSSRKRRKS) shows a compositional bias: basic residues. Residues 681-800 (GGTS…GAVA) and 841-961 (RLTS…IAQR) contribute to the a nucleoside 3',5'-cyclic phosphate site. A PNPLA domain is found at 1220–1384 (LVLGGGGARG…IDNLTVDHMK (165 aa)). Positions 1224–1229 (GGGARG) match the GXGXXG motif. Positions 1251–1255 (GTSIG) match the GXSXG motif. Ser-1253 functions as the Nucleophile in the catalytic mechanism. Residue Asp-1371 is the Proton acceptor of the active site. Positions 1371 to 1373 (DGG) match the DGA/G motif. The tract at residues 1502–1523 (LPEETEEKKKLQRTMAPRRASI) is disordered.

Belongs to the NTE family.

Its subcellular location is the endoplasmic reticulum membrane. It catalyses the reaction a 1-acyl-sn-glycero-3-phosphocholine + H2O = sn-glycerol 3-phosphocholine + a fatty acid + H(+). Its activity is regulated as follows. Inhibited by organophosphorus esters. In terms of biological role, intracellular phospholipase B that catalyzes the double deacylation of phosphatidylcholine (PC) to glycerophosphocholine (GroPCho). Plays an important role in membrane lipid homeostasis. Responsible for the rapid PC turnover in response to inositol, elevated temperatures, or when choline is present in the growth medium. The protein is Lysophospholipase nte1 (nte1) of Neosartorya fischeri (strain ATCC 1020 / DSM 3700 / CBS 544.65 / FGSC A1164 / JCM 1740 / NRRL 181 / WB 181) (Aspergillus fischerianus).